Consider the following 406-residue polypeptide: Zinc finger protein 57 (406 aa).

One can recognise a KRAB domain in the interval 17 to 88 (VRYEDVAVSF…TCTGVFKGGP (72 aa)). Residues 57-77 (ESKKKPQEPNPNLKDKDDDKS) are disordered. A C2H2-type 1; degenerate zinc finger spans residues 90–113 (FFCLTCGKCFKKNTFLFNHQFPVR). C2H2-type zinc fingers lie at residues 140–162 (FFCNLCGKTYRDASGLSRHRRAH) and 168–190 (RSCPECGKCFRDQSEVNRHLKVH). The disordered stretch occupies residues 194–226 (KPVAGSHVKVHQNKPVASNQKQKGRVPPTTRES). The C2H2-type 4 zinc finger occupies 270–292 (VYCPYCRITFTMRTCLLNHLKIH). A C2H2-type 5; degenerate zinc finger spans residues 318 to 337 (YNCPVCDSSFRGKESLLNHL). The segment at 372–406 (SRKRRRKRISSDSSETEGPSGSDEVMEVDTDSDLS) is disordered. Residues 395 to 406 (EVMEVDTDSDLS) are compositionally biased toward acidic residues.

Belongs to the krueppel C2H2-type zinc-finger protein family. In terms of tissue distribution, expressed in oligodendrocytes and at lower levels in astrocytes.

Its subcellular location is the nucleus. Transcription regulator required to maintain maternal and paternal gene imprinting, a process by which gene expression is restricted in a parent of origin-specific manner by epigenetic modification of genomic DNA and chromatin, including DNA methylation. Acts by controlling DNA methylation during the earliest multicellular stages of development at multiple imprinting control regions (ICRs). Acts together with ZNF445. Required for the establishment of maternal methylation imprints at SNRPN locus. Acts as a transcriptional repressor in Schwann cells. Binds to a 5'-TGCCGC-3' consensus sequence and recognizes the methylated CpG within this element. The polypeptide is Zinc finger protein 57 (Zfp57) (Rattus norvegicus (Rat)).